A 193-amino-acid chain; its full sequence is dTTP/UTP pyrophosphatase (193 aa).

Asp71 (proton acceptor) is an active-site residue.

This sequence belongs to the Maf family. YhdE subfamily. A divalent metal cation is required as a cofactor.

Its subcellular location is the cytoplasm. The catalysed reaction is dTTP + H2O = dTMP + diphosphate + H(+). It carries out the reaction UTP + H2O = UMP + diphosphate + H(+). Its function is as follows. Nucleoside triphosphate pyrophosphatase that hydrolyzes dTTP and UTP. May have a dual role in cell division arrest and in preventing the incorporation of modified nucleotides into cellular nucleic acids. The sequence is that of dTTP/UTP pyrophosphatase from Dictyoglomus turgidum (strain DSM 6724 / Z-1310).